A 260-amino-acid chain; its full sequence is Indole-3-glycerol phosphate synthase (260 aa).

This sequence belongs to the TrpC family.

It catalyses the reaction 1-(2-carboxyphenylamino)-1-deoxy-D-ribulose 5-phosphate + H(+) = (1S,2R)-1-C-(indol-3-yl)glycerol 3-phosphate + CO2 + H2O. It participates in amino-acid biosynthesis; L-tryptophan biosynthesis; L-tryptophan from chorismate: step 4/5. This chain is Indole-3-glycerol phosphate synthase, found in Staphylococcus aureus (strain MRSA252).